The sequence spans 194 residues: Homing endonuclease I-DmoI (194 aa).

Positions 14–147 (LLGLIIGDGG…VSRWLNNLGV (134 aa)) constitute a DOD-type homing endonuclease domain. Catalysis depends on residues aspartate 21 and glutamate 117.

A divalent metal cation is required as a cofactor.

Functionally, endonuclease involved in intron homing. Recognizes DNA in the 23S rRNA gene intron (minimally 5'-CCGGGTAAGTTCCGG-3'), cutting after A-8 on the top and C-11 on the bottom strand. Has a slow turnover rate, cuts the coding strand with a slight preference over the non-coding strand. The sequence is that of Homing endonuclease I-DmoI from Desulfurococcus mucosus (Desulfurococcus mobilis).